The primary structure comprises 224 residues: Myogenin (224 aa).

2 positions are modified to phosphoserine; by CaMK2G: serine 77 and serine 79. The bHLH domain occupies 81-132; it reads DRRRAATLREKRRLKKVNEAFEALKRSTLLNPNQRLPKVEILRSAIQYIERL. A Phosphothreonine; by CaMK2G modification is found at threonine 87.

In terms of assembly, homodimer and heterodimer with E12; heterodimerization enhances MYOG DNA-binding and transcriptional activities. Interacts with SMARCA4/BRG1/BAF190A. Interacts (via C-terminal region) with SSRP1 and SUPT16H; the interaction is indicative of an interaction with the FACT complex. nteracts with CSRP3. Phosphorylated by CAMK2G on threonine and serine amino acids in a muscle activity-dependent manner. Phosphorylation of Thr-87 impairs both DNA-binding and trans-activation functions in contracting muscles. Expressed in myoblast cells. Expressed weakly in myotubes (at protein level). Expressed strongly in denervated muscles and in satellite cells isolated from denervated muscles. Expressed weakly in innervated muscle and in satellite cells isolated from innervated muscles.

Its subcellular location is the nucleus. In terms of biological role, acts as a transcriptional activator that promotes transcription of muscle-specific target genes and plays a role in muscle differentiation, cell cycle exit and muscle atrophy. Essential for the development of functional embryonic skeletal fiber muscle differentiation. However is dispensable for postnatal skeletal muscle growth; phosphorylation by CAMK2G inhibits its transcriptional activity in respons to muscle activity. Required for the recruitment of the FACT complex to muscle-specific promoter regions, thus promoting gene expression initiation. During terminal myoblast differentiation, plays a role as a strong activator of transcription at loci with an open chromatin structure previously initiated by MYOD1. Together with MYF5 and MYOD1, co-occupies muscle-specific gene promoter core regions during myogenesis. Also cooperates with myocyte-specific enhancer factor MEF2D and BRG1-dependent recruitment of SWI/SNF chromatin-remodeling enzymes to alter chromatin structure at myogenic late gene promoters. Facilitates cell cycle exit during terminal muscle differentiation through the up-regulation of miR-20a expression, which in turn represses genes involved in cell cycle progression. Binds to the E-box containing (E1) promoter region of the miR-20a gene. Also plays a role in preventing reversal of muscle cell differentiation. Contributes to the atrophy-related gene expression in adult denervated muscles. Induces fibroblasts to differentiate into myoblasts. This is Myogenin (Myog) from Mus musculus (Mouse).